A 279-amino-acid chain; its full sequence is Secreted RxLR effector protein 90 (279 aa).

Residues 1–19 form the signal peptide; sequence MKSAAAFATFLTLSVFVAT. The RxLR-dEER motif lies at 29 to 46; sequence RGLRSLADNQSTESSEGR. Disordered stretches follow at residues 29–53 and 135–176; these read RGLRSLADNQSTESSEGRKDHYNHH and ATPA…NLAG. N-linked (GlcNAc...) asparagine glycosylation occurs at Asn37. The span at 135-146 shows a compositional bias: low complexity; that stretch reads ATPAPTTSVPSS. Residues 147-163 are compositionally biased toward polar residues; the sequence is LVNTDTSDNQLPTTPVA. The span at 166-176 shows a compositional bias: gly residues; sequence QGGGIGSNLAG. The N-linked (GlcNAc...) asparagine glycan is linked to Asn217.

Belongs to the RxLR effector family.

The protein resides in the secreted. It localises to the host cell membrane. Secreted effector that completely suppresses the host cell death induced by cell death-inducing proteins. This chain is Secreted RxLR effector protein 90, found in Plasmopara viticola (Downy mildew of grapevine).